A 2155-amino-acid polypeptide reads, in one-letter code: Polyketide synthase 2 (2155 aa).

The segment at 7–244 is N-terminal acylcarrier protein transacylase domain (SAT); sequence FIFGDQTGGF…IPIPIWAPYH (238 aa). Residues 374–807 enclose the Ketosynthase family 3 (KS3) domain; the sequence is DSKIAIIGMS…GGNSALLLED (434 aa). Residues C546, H681, and H723 each act as for beta-ketoacyl synthase activity in the active site. Residues 908–1213 form a malonyl-CoA:ACP transacylase (MAT) domain region; the sequence is GFVFSGQGAQ…ASLHRKDDGW (306 aa). S998 functions as the For acyl/malonyl transferase activity in the catalytic mechanism. The tract at residues 1290 to 1605 is product template (PT) domain; sequence TSSVQRIIRQ…RSLLNKVLPP (316 aa). An N-terminal hotdog fold region spans residues 1294 to 1428; it reads QRIIRQTDGP…CLLRFADPTS (135 aa). Positions 1294–1600 constitute a PKS/mFAS DH domain; that stretch reads QRIIRQTDGP…FLGMSRSLLN (307 aa). The Proton acceptor; for dehydratase activity role is filled by H1327. Positions 1455–1600 are C-terminal hotdog fold; it reads TDSLLSKGIV…FLGMSRSLLN (146 aa). Catalysis depends on D1514, which acts as the Proton donor; for dehydratase activity. The tract at residues 1626-1654 is disordered; the sequence is AASAKDTERRPLDIPTRAQRQPSSPQTGT. Positions 1643 to 1654 are enriched in polar residues; that stretch reads AQRQPSSPQTGT. The Carrier 1 domain occupies 1649 to 1726; sequence SPQTGTMGRI…ELKAFLGADQ (78 aa). S1686 bears the O-(pantetheine 4'-phosphoryl)serine mark. The segment at 1735-1765 is disordered; sequence SSIGQHTPQTSDKGSGTLASQKTDGDTGPDT. Positions 1736–1756 are enriched in polar residues; that stretch reads SIGQHTPQTSDKGSGTLASQK. Residues 1764–1838 form the Carrier 2 domain; sequence DTTLNRVCAI…ALQKALCGSE (75 aa). S1798 carries the O-(pantetheine 4'-phosphoryl)serine modification. Residues 1873-2149 are thioesterase (TE) domain; that stretch reads ASPPHATSIL…MVEMGNLIGD (277 aa). S1979 acts as the For thioesterase activity in catalysis.

Its function is as follows. Polyketide synthase; part of the Pks2 gene cluster that mediates the formation of infectious structures (appressoria), enabling these fungi to kill insects faster. The product of the Pks2 gene cluster is different from the one of Pks1 and has still not been identified. The polypeptide is Polyketide synthase 2 (Metarhizium anisopliae (strain ARSEF 549)).